The chain runs to 321 residues: Ribosomal RNA small subunit methyltransferase H (321 aa).

S-adenosyl-L-methionine-binding positions include 44–46, D64, F88, D109, and Q116; that span reads GGH.

This sequence belongs to the methyltransferase superfamily. RsmH family.

It is found in the cytoplasm. It carries out the reaction cytidine(1402) in 16S rRNA + S-adenosyl-L-methionine = N(4)-methylcytidine(1402) in 16S rRNA + S-adenosyl-L-homocysteine + H(+). Its function is as follows. Specifically methylates the N4 position of cytidine in position 1402 (C1402) of 16S rRNA. The polypeptide is Ribosomal RNA small subunit methyltransferase H (Methylobacillus flagellatus (strain ATCC 51484 / DSM 6875 / VKM B-1610 / KT)).